Reading from the N-terminus, the 535-residue chain is EH domain-containing protein 3 (535 aa).

The residue at position 1 (methionine 1) is an N-acetylmethionine. Residues 55-286 form the Dynamin-type G domain; that stretch reads FDNKPMVLLV…DLFRDIQSLP (232 aa). Residues 65 to 72 form a G1 motif region; the sequence is GQYSTGKT. 65-72 is an ATP binding site; sequence GQYSTGKT. A G2 motif region spans residues 91 to 92; the sequence is EP. Residues 153–156 are G3 motif; the sequence is DTPG. Residues 198-227 adopt a coiled-coil conformation; sequence DEFSEVIKALKNHEDKMRVVLNKADQIETQ. The G4 motif stretch occupies residues 219 to 222; the sequence is NKAD. Position 220 (lysine 220) interacts with ATP. A region of interest (G5 motif) is located at residue isoleucine 243. Tryptophan 258 serves as a coordination point for ATP. Residue lysine 315 forms a Glycyl lysine isopeptide (Lys-Gly) (interchain with G-Cter in SUMO) linkage. Phosphoserine occurs at positions 349 and 456. The region spanning 444 to 532 is the EH domain; the sequence is DKPMYDEIFY…AHLLPPSKRK (89 aa). The EF-hand domain occupies 476 to 511; sequence LPNSVLGKIWKLADIDKDGMLDDEEFALANHLIKVK. Residues aspartate 489, aspartate 491, aspartate 493, methionine 495, and glutamate 500 each coordinate Ca(2+). Lysine 511 participates in a covalent cross-link: Glycyl lysine isopeptide (Lys-Gly) (interchain with G-Cter in SUMO).

This sequence belongs to the TRAFAC class dynamin-like GTPase superfamily. Dynamin/Fzo/YdjA family. EHD subfamily. In terms of assembly, homooligomer. Heterooligomer with EHD1. Heterooligomer with EHD2 and EHD4; ATP-binding is required for heterooligomerization. Interacts with PACSIN1. Interacts with PACSIN2. Interacts (via EH domain) with MICALL1. Interacts (via EH domain) with RAB11FIP2. Interacts with ANK2. Interacts with CACNA1GG and CACNA1H. In terms of tissue distribution, strong expression seen in the kidney, brain and liver. In the kidney, expressed exclusively by glomerular endothelial cells; at protein level. Expressed in skeletal muscle neuromuscular junction perisynaptic region; at protein level.

The protein resides in the recycling endosome membrane. The protein localises to the cell membrane. Its subcellular location is the cell projection. It localises to the cilium membrane. It is found in the cytoplasmic vesicle. Functionally, ATP- and membrane-binding protein that controls membrane reorganization/tubulation upon ATP hydrolysis. In vitro causes tubulation of endocytic membranes. Binding to phosphatidic acid induces its membrane tubulation activity. Plays a role in endocytic transport. Involved in early endosome to recycling endosome compartment (ERC), retrograde early endosome to Golgi, and endosome to plasma membrane (rapid recycling) protein transport. Involved in the regulation of Golgi maintenance and morphology. Involved in the recycling of internalized D1 dopamine receptor. Plays a role in cardiac protein trafficking probably implicating ANK2. Involved in the ventricular membrane targeting of SLC8A1 and CACNA1C and probably the atrial membrane localization of CACNA1GG and CACNA1H implicated in the regulation of atrial myocyte excitability and cardiac conduction. In conjunction with EHD4 may be involved in endocytic trafficking of KDR/VEGFR2 implicated in control of glomerular function. Involved in the rapid recycling of integrin beta-3 implicated in cell adhesion maintenance. Involved in the unidirectional retrograde dendritic transport of endocytosed BACE1 and in efficient sorting of BACE1 to axons implicating a function in neuronal APP processing. Plays a role in the formation of the ciliary vesicle, an early step in cilium biogenesis; possibly sharing redundant functions with Ehd1. This Mus musculus (Mouse) protein is EH domain-containing protein 3.